Reading from the N-terminus, the 388-residue chain is T-cell surface glycoprotein CD1e, membrane-associated (388 aa).

An N-terminal signal peptide occupies residues 1–19; that stretch reads MLLLFLLFEGLCCPGENTA. A propeptide spans 20–31 (removed in sCD1e); that stretch reads APQALQSYHLAA. 2 N-linked (GlcNAc...) asparagine glycosylation sites follow: Asn47 and Asn84. The region spanning 191-301 is the Ig-like domain; sequence PRFLAGLMEA…LGGHDLIIHW (111 aa). The cysteines at positions 230 and 285 are disulfide-linked. The helical transmembrane segment at 305–325 threads the bilayer; the sequence is SIFLILICLTVIVTLVILVVV.

Heterodimer with B2M (beta-2-microglobulin). The association with B2M appears to be facilitated by the presence of the propeptide. Mono-ubiquitinated. Post-translationally, proteolytically cleaved in late endosomes to yield a soluble form. As to expression, expressed on cortical thymocytes, dendritic cells, Langerhans cells, on certain T-cell leukemias, and in various other tissues.

The protein resides in the golgi apparatus membrane. Its subcellular location is the early endosome. It is found in the late endosome. It localises to the lysosome lumen. T-cell surface glycoprotein CD1e, soluble binds diacetylated lipids, including phosphatidyl inositides and diacylated sulfoglycolipids, and is required for the presentation of glycolipid antigens on the cell surface. The membrane-associated form is not active. This Homo sapiens (Human) protein is T-cell surface glycoprotein CD1e, membrane-associated (CD1E).